The chain runs to 361 residues: Porphobilinogen deaminase (361 aa).

At Cys-265 the chain carries S-(dipyrrolylmethanemethyl)cysteine. The segment at 341-361 (LPPSSNTPTPQPITPITTNNS) is disordered.

It belongs to the HMBS family. The cofactor is dipyrromethane.

The enzyme catalyses 4 porphobilinogen + H2O = hydroxymethylbilane + 4 NH4(+). Its pathway is porphyrin-containing compound metabolism; protoporphyrin-IX biosynthesis; coproporphyrinogen-III from 5-aminolevulinate: step 2/4. Tetrapolymerization of the monopyrrole PBG into the hydroxymethylbilane pre-uroporphyrinogen in several discrete steps. The polypeptide is Porphobilinogen deaminase (HEM3) (Debaryomyces hansenii (strain ATCC 36239 / CBS 767 / BCRC 21394 / JCM 1990 / NBRC 0083 / IGC 2968) (Yeast)).